Reading from the N-terminus, the 320-residue chain is Protein U25 (320 aa).

This sequence belongs to the herpesviridae US22 family.

The polypeptide is Protein U25 (U25) (Human herpesvirus 7 (strain JI) (HHV-7)).